A 197-amino-acid chain; its full sequence is Glycerol-3-phosphate acyltransferase (197 aa).

A run of 5 helical transmembrane segments spans residues 7 to 27 (TLLP…LILT), 55 to 75 (GLAA…VLIV), 78 to 98 (VWPG…CFPV), 116 to 136 (LALA…VLFL), and 157 to 177 (VLGY…VLYL).

The protein belongs to the PlsY family. In terms of assembly, probably interacts with PlsX.

It localises to the cell inner membrane. The enzyme catalyses an acyl phosphate + sn-glycerol 3-phosphate = a 1-acyl-sn-glycero-3-phosphate + phosphate. The protein operates within lipid metabolism; phospholipid metabolism. Catalyzes the transfer of an acyl group from acyl-phosphate (acyl-PO(4)) to glycerol-3-phosphate (G3P) to form lysophosphatidic acid (LPA). This enzyme utilizes acyl-phosphate as fatty acyl donor, but not acyl-CoA or acyl-ACP. The polypeptide is Glycerol-3-phosphate acyltransferase (Novosphingobium aromaticivorans (strain ATCC 700278 / DSM 12444 / CCUG 56034 / CIP 105152 / NBRC 16084 / F199)).